We begin with the raw amino-acid sequence, 71 residues long: Large ribosomal subunit protein bL31 (71 aa).

Residues Cys16, Cys18, Cys37, and Cys40 each coordinate Zn(2+).

The protein belongs to the bacterial ribosomal protein bL31 family. Type A subfamily. As to quaternary structure, part of the 50S ribosomal subunit. Requires Zn(2+) as cofactor.

Functionally, binds the 23S rRNA. This chain is Large ribosomal subunit protein bL31, found in Nitratidesulfovibrio vulgaris (strain ATCC 29579 / DSM 644 / CCUG 34227 / NCIMB 8303 / VKM B-1760 / Hildenborough) (Desulfovibrio vulgaris).